A 237-amino-acid chain; its full sequence is Large ribosomal subunit protein uL1 (237 aa).

This sequence belongs to the universal ribosomal protein uL1 family. As to quaternary structure, part of the 50S ribosomal subunit.

Binds directly to 23S rRNA. The L1 stalk is quite mobile in the ribosome, and is involved in E site tRNA release. Its function is as follows. Protein L1 is also a translational repressor protein, it controls the translation of the L11 operon by binding to its mRNA. The protein is Large ribosomal subunit protein uL1 of Synechococcus elongatus (strain ATCC 33912 / PCC 7942 / FACHB-805) (Anacystis nidulans R2).